Consider the following 279-residue polypeptide: Phosphonates import ATP-binding protein PhnC 2 (279 aa).

Residues 10–253 (LSLKGVSVRY…VARNLYAKQS (244 aa)) form the ABC transporter domain. 43–50 (GASGAGKS) provides a ligand contact to ATP. Low complexity predominate over residues 253 to 262 (SNASNTSAST). The tract at residues 253–279 (SNASNTSASTDSPRTLQSSQTKELLPC) is disordered. The segment covering 263-279 (DSPRTLQSSQTKELLPC) has biased composition (polar residues).

This sequence belongs to the ABC transporter superfamily. Phosphonates importer (TC 3.A.1.9.1) family. As to quaternary structure, the complex is composed of two ATP-binding proteins (PhnC), two transmembrane proteins (PhnE) and a solute-binding protein (PhnD).

The protein resides in the cell inner membrane. It catalyses the reaction phosphonate(out) + ATP + H2O = phosphonate(in) + ADP + phosphate + H(+). Its function is as follows. Part of the ABC transporter complex PhnCDE involved in phosphonates import. Responsible for energy coupling to the transport system. The sequence is that of Phosphonates import ATP-binding protein PhnC 2 from Cupriavidus metallidurans (strain ATCC 43123 / DSM 2839 / NBRC 102507 / CH34) (Ralstonia metallidurans).